The primary structure comprises 417 residues: S-adenosylmethionine synthase (417 aa).

H16 contributes to the ATP binding site. D18 is a Mg(2+) binding site. E44 serves as a coordination point for K(+). L-methionine contacts are provided by E57 and Q100. Residues 100–110 (QSPDIAQGVTS) form a flexible loop region. ATP-binding positions include 175 to 177 (DGK), 251 to 252 (KF), D260, 266 to 267 (RK), A283, and K287. D260 is a binding site for L-methionine. An L-methionine-binding site is contributed by K291.

Belongs to the AdoMet synthase family. In terms of assembly, homotetramer; dimer of dimers. Mg(2+) serves as cofactor. K(+) is required as a cofactor.

The protein resides in the cytoplasm. The catalysed reaction is L-methionine + ATP + H2O = S-adenosyl-L-methionine + phosphate + diphosphate. It functions in the pathway amino-acid biosynthesis; S-adenosyl-L-methionine biosynthesis; S-adenosyl-L-methionine from L-methionine: step 1/1. Catalyzes the formation of S-adenosylmethionine (AdoMet) from methionine and ATP. The overall synthetic reaction is composed of two sequential steps, AdoMet formation and the subsequent tripolyphosphate hydrolysis which occurs prior to release of AdoMet from the enzyme. The chain is S-adenosylmethionine synthase from Picosynechococcus sp. (strain ATCC 27264 / PCC 7002 / PR-6) (Agmenellum quadruplicatum).